Reading from the N-terminus, the 184-residue chain is Ribosome-recycling factor (184 aa).

It belongs to the RRF family.

It localises to the cytoplasm. Functionally, responsible for the release of ribosomes from messenger RNA at the termination of protein biosynthesis. May increase the efficiency of translation by recycling ribosomes from one round of translation to another. This Stenotrophomonas maltophilia (strain K279a) protein is Ribosome-recycling factor.